The following is a 386-amino-acid chain: Protein phosphatase methylesterase 1 (386 aa).

Residues 1 to 38 (MSALEKSMHLGRLPSRPPLPGSGGSQSGAKMRMGPGRK) are disordered. At serine 15 the chain carries Phosphoserine. Arginine 16 is modified (asymmetric dimethylarginine; alternate). Arginine 16 carries the post-translational modification Omega-N-methylarginine; alternate. The residue at position 42 (serine 42) is a Phosphoserine. Residue serine 156 is part of the active site. Over residues 254–265 (IIEEEEEDEEGS) the composition is skewed to acidic residues. Positions 254–280 (IIEEEEEDEEGSESISKRKKEDDMETK) are disordered. Over residues 268-280 (ISKRKKEDDMETK) the composition is skewed to basic and acidic residues. Histidine 349 is a catalytic residue.

Belongs to the AB hydrolase superfamily. Binds PPP2CA and PPP2CB. Post-translationally, phosphorylated by SIK1 following increases in intracellular sodium, leading to dissociation from the protein phosphatase 2A (PP2A) complex and subsequent dephosphorylation of sodium/potassium-transporting ATPase ATP1A1.

The enzyme catalyses [phosphatase 2A protein]-C-terminal L-leucine methyl ester + H2O = [phosphatase 2A protein]-C-terminal L-leucine + methanol + H(+). Demethylates proteins that have been reversibly carboxymethylated. Demethylates PPP2CB (in vitro) and PPP2CA. Binding to PPP2CA displaces the manganese ion and inactivates the enzyme. The sequence is that of Protein phosphatase methylesterase 1 (PPME1) from Pongo abelii (Sumatran orangutan).